Here is a 428-residue protein sequence, read N- to C-terminus: Glutamyl-tRNA reductase (428 aa).

Residues 49 to 52 (TCNR), Ser-109, 114 to 116 (EGQ), and Gln-120 contribute to the substrate site. Catalysis depends on Cys-50, which acts as the Nucleophile. 189–194 (GAGKMS) contributes to the NADP(+) binding site.

This sequence belongs to the glutamyl-tRNA reductase family. As to quaternary structure, homodimer.

The catalysed reaction is (S)-4-amino-5-oxopentanoate + tRNA(Glu) + NADP(+) = L-glutamyl-tRNA(Glu) + NADPH + H(+). Its pathway is porphyrin-containing compound metabolism; protoporphyrin-IX biosynthesis; 5-aminolevulinate from L-glutamyl-tRNA(Glu): step 1/2. It participates in porphyrin-containing compound metabolism; chlorophyll biosynthesis. In terms of biological role, catalyzes the NADPH-dependent reduction of glutamyl-tRNA(Glu) to glutamate 1-semialdehyde (GSA). The sequence is that of Glutamyl-tRNA reductase from Trichormus variabilis (strain ATCC 29413 / PCC 7937) (Anabaena variabilis).